The sequence spans 259 residues: Small ribosomal subunit protein uS2 (259 aa).

A disordered region spans residues 234–259; it reads VAEDSEEVSTVDADAITAEDFETEEV. Residues 250-259 show a composition bias toward acidic residues; the sequence is TAEDFETEEV.

This sequence belongs to the universal ribosomal protein uS2 family.

This chain is Small ribosomal subunit protein uS2, found in Sulfurimonas denitrificans (strain ATCC 33889 / DSM 1251) (Thiomicrospira denitrificans (strain ATCC 33889 / DSM 1251)).